The sequence spans 333 residues: Holliday junction branch migration complex subunit RuvB (333 aa).

The interval 1 to 181 is large ATPase domain (RuvB-L); it reads MTRILDNDLI…FGITGHMEYY (181 aa). ATP is bound by residues Leu-20, Arg-21, Gly-62, Lys-65, Thr-66, Thr-67, 128–130, Arg-171, Tyr-181, and Arg-218; that span reads EDF. Thr-66 provides a ligand contact to Mg(2+). Residues 182-252 form a small ATPAse domain (RuvB-S) region; it reads QTADLTEIVE…ITDKALTMLD (71 aa). Residues 255-333 are head domain (RuvB-H); sequence QEGLDYVDQK…HLGYPYEKKH (79 aa). Positions 291, 310, 312, and 315 each coordinate DNA.

The protein belongs to the RuvB family. Homohexamer. Forms an RuvA(8)-RuvB(12)-Holliday junction (HJ) complex. HJ DNA is sandwiched between 2 RuvA tetramers; dsDNA enters through RuvA and exits via RuvB. An RuvB hexamer assembles on each DNA strand where it exits the tetramer. Each RuvB hexamer is contacted by two RuvA subunits (via domain III) on 2 adjacent RuvB subunits; this complex drives branch migration. In the full resolvosome a probable DNA-RuvA(4)-RuvB(12)-RuvC(2) complex forms which resolves the HJ.

It localises to the cytoplasm. It carries out the reaction ATP + H2O = ADP + phosphate + H(+). Functionally, the RuvA-RuvB-RuvC complex processes Holliday junction (HJ) DNA during genetic recombination and DNA repair, while the RuvA-RuvB complex plays an important role in the rescue of blocked DNA replication forks via replication fork reversal (RFR). RuvA specifically binds to HJ cruciform DNA, conferring on it an open structure. The RuvB hexamer acts as an ATP-dependent pump, pulling dsDNA into and through the RuvAB complex. RuvB forms 2 homohexamers on either side of HJ DNA bound by 1 or 2 RuvA tetramers; 4 subunits per hexamer contact DNA at a time. Coordinated motions by a converter formed by DNA-disengaged RuvB subunits stimulates ATP hydrolysis and nucleotide exchange. Immobilization of the converter enables RuvB to convert the ATP-contained energy into a lever motion, pulling 2 nucleotides of DNA out of the RuvA tetramer per ATP hydrolyzed, thus driving DNA branch migration. The RuvB motors rotate together with the DNA substrate, which together with the progressing nucleotide cycle form the mechanistic basis for DNA recombination by continuous HJ branch migration. Branch migration allows RuvC to scan DNA until it finds its consensus sequence, where it cleaves and resolves cruciform DNA. The chain is Holliday junction branch migration complex subunit RuvB from Streptococcus equi subsp. zooepidemicus (strain MGCS10565).